A 617-amino-acid polypeptide reads, in one-letter code: Zinc metalloproteinase nas-36 (617 aa).

An N-terminal signal peptide occupies residues 1-22; the sequence is MRLCHSIILFNSLISISICSKA. Residues 23–126 constitute a propeptide that is removed on maturation; the sequence is DDPALLVASE…SKDKTKRLRR (104 aa). Positions 127 to 322 constitute a Peptidase M12A domain; the sequence is SFVSDKTATW…VATINTAYCK (196 aa). 9 disulfide bridges follow: C169–C321, C192–C211, C325–C346, C348–C357, C368–C397, C425–C445, C519–C550, C523–C555, and C535–C540. A glycan (N-linked (GlcNAc...) asparagine) is linked at N174. H219 provides a ligand contact to Zn(2+). Residue E220 is part of the active site. Zn(2+) is bound by residues H223 and H229. The EGF-like domain occupies 317–358; that stretch reads NTAYCKDECKSEKTKCENGGYMRPSKCSECLCPDGLGGEKCE. Residues 368-482 enclose the CUB domain; the sequence is CGGIIKLTEE…IGFKIQAKST (115 aa). Residues 507-556 enclose the TSP type-1 domain; sequence PNVWADWGEWSMCSRTCGGCGIRSRVRSCRSKKCEGRRQEFGTCNLKACP.

It depends on Zn(2+) as a cofactor. As to expression, expressed in hypodermal cells. Also detected in the hypodermal seam cells in L4 larvae and young adults. In old adult hermaphrodites, it localizes to the vulva (at protein level).

It is found in the secreted. Its function is as follows. Metalloprotease. Involved in molting, a process during larval stages in which a new cuticle is formed and the old cuticle is shed. In Caenorhabditis elegans, this protein is Zinc metalloproteinase nas-36 (nas-36).